Consider the following 156-residue polypeptide: Regulatory protein RecX (156 aa).

It belongs to the RecX family.

It localises to the cytoplasm. Its function is as follows. Modulates RecA activity. The polypeptide is Regulatory protein RecX (Pseudomonas putida (strain ATCC 700007 / DSM 6899 / JCM 31910 / BCRC 17059 / LMG 24140 / F1)).